We begin with the raw amino-acid sequence, 216 residues long: Protein ORM2 (216 aa).

Positions 1-50 (MIDRTKNESPAFEESPLTPNVSNLKPFPSQSNKISTPVTDHRRRRSSSVI) are disordered. The Cytoplasmic portion of the chain corresponds to 1–78 (MIDRTKNESP…NMNATWVDQR (78 aa)). A phosphoserine mark is found at Ser9 and Ser15. Over residues 17–38 (LTPNVSNLKPFPSQSNKISTPV) the composition is skewed to polar residues. Position 18 is a phosphothreonine (Thr18). Residues Ser22, Ser29, and Ser51 each carry the phosphoserine modification. Residues 79–99 (GAWLIHIVVIVLLRLFYSLFG) form a helical membrane-spanning segment. The Extracellular segment spans residues 100–103 (STPK). Residues 104 to 124 (WTWTLTNMTYIIGFYIMFHLV) traverse the membrane as a helical segment. At 125-148 (KGTPFDFNGGAYDNLTMWEQINDE) the chain is on the cytoplasmic side. Residues 149 to 169 (TLYTPTRKFLLIVPIVLFLIS) traverse the membrane as a helical segment. At 170–177 (NQYYRNDM) the chain is on the extracellular side. A helical transmembrane segment spans residues 178–198 (TLFLSNLAVTVLIGVVPKLGI). At 199 to 216 (THRLRISIPGITGRAQIS) the chain is on the cytoplasmic side.

This sequence belongs to the ORM family. In terms of assembly, component of the SPOTS complex, at least composed of LCB1/2 (LCB1 and/or LCB2), ORM1/2 (ORM1 and/or ORM2), SAC1 and TSC3. In terms of processing, phosphorylated in case of disruption of sphingolipid synthesis. Phosphorylation regulates the inhibitory activity of serine palmitoyltransferases (LCB1 and LCB2).

The protein localises to the endoplasmic reticulum membrane. In terms of biological role, component of the SPOTS complex that acts as a negative regulator of sphingolipid synthesis. Acts by inhibiting serine palmitoyltransferases (LCB1 and LCB2) activity. Along with ORM1, plays a role in the phosphorylation of LAC1 and YPK1, the distribution of actin patches between mother and daughter cells, and in endocytosis. In Saccharomyces cerevisiae (strain ATCC 204508 / S288c) (Baker's yeast), this protein is Protein ORM2 (ORM2).